A 455-amino-acid polypeptide reads, in one-letter code: F-box/LRR-repeat protein At5g35995 (455 aa).

In terms of domain architecture, F-box spans 4–51 (RDFISSLPDEVLGKKILSLLPTKLVVSTSVLSKRWRNLFHFVDSFDLE). LRR repeat units follow at residues 114–138 (DHYL…SYRT), 152–176 (FPAL…LISG), 282–305 (IRNV…CYTM), 308–324 (FDKL…ENGW), and 325–348 (QALP…LLHK).

This Arabidopsis thaliana (Mouse-ear cress) protein is F-box/LRR-repeat protein At5g35995.